A 339-amino-acid chain; its full sequence is Lipopolysaccharide 1,2-glucosyltransferase (339 aa).

Residues 35–40 (GIDENY) and 132–133 (DA) contribute to the UDP site. Positions 132 and 134 each coordinate Mg(2+). 2 short sequence motifs (DXD) span residues 132-134 (DAD) and 219-221 (DQD). Position 268 (histidine 268) interacts with Mg(2+). 268–274 (HYTGITK) provides a ligand contact to UDP.

Belongs to the glycosyltransferase 8 family. Mg(2+) is required as a cofactor.

The protein localises to the cell inner membrane. The catalysed reaction is UDP-glucose + [lipopolysaccharide] = UDP + D-glucosyl-[lipopolysaccharide].. It participates in bacterial outer membrane biogenesis; LPS core biosynthesis. Functionally, glucosyltransferase involved in the biosynthesis of the core oligosaccharide region of lipopolysaccharide (LPS). Catalyzes the addition of a glucose (glucose II) to the outer-core galactose I. Has a marked preference for its specific donor substrate, but it appears to have a relaxed specificity for alternate LPS acceptor residues, providing the overall size of the acceptor is conserved. This Escherichia coli protein is Lipopolysaccharide 1,2-glucosyltransferase.